We begin with the raw amino-acid sequence, 168 residues long: Alpha-N-acetylgalactosamine-specific lectin (168 aa).

A signal peptide spans 1–18 (MAFFRALCFVLLVGFAAA). In terms of domain architecture, C-type lectin spans 38–163 (YNGNCYRYFG…CSRAFAYVCK (126 aa)). Intrachain disulfides connect Cys59/Cys162 and Cys136/Cys154.

Monomer, homodimer and homooligomer.

Its function is as follows. Alpha-N-acetylgalactosamine-specific lectin. The oligomeric form has Ca(2+)-dependent hemagglutination activity towards sheep erythrocytes. Its hemagglutination activity is inhibited by various monosaccharides, oligosaccharides and glycopeptides, including inhibition by GalNAc, blood group A trisaccharide, Tn antigen, mucin and asialomucin. The chain is Alpha-N-acetylgalactosamine-specific lectin from Patiria pectinifera (Starfish).